A 210-amino-acid polypeptide reads, in one-letter code: LexA repressor (210 aa).

Residues 25 to 44 (AGQVAQEVGITKQAISQQVN) constitute a DNA-binding region (H-T-H motif). Catalysis depends on for autocatalytic cleavage activity residues Ser-120 and Lys-159.

It belongs to the peptidase S24 family. As to quaternary structure, homodimer.

The catalysed reaction is Hydrolysis of Ala-|-Gly bond in repressor LexA.. Its function is as follows. Represses a number of genes involved in the response to DNA damage (SOS response), including recA and lexA. In the presence of single-stranded DNA, RecA interacts with LexA causing an autocatalytic cleavage which disrupts the DNA-binding part of LexA, leading to derepression of the SOS regulon and eventually DNA repair. The sequence is that of LexA repressor from Deinococcus radiodurans (strain ATCC 13939 / DSM 20539 / JCM 16871 / CCUG 27074 / LMG 4051 / NBRC 15346 / NCIMB 9279 / VKM B-1422 / R1).